Reading from the N-terminus, the 1270-residue chain is Myosin-1 (1270 aa).

Residues 1–40 (MGHSRRPAGGEKKSRGFGRSKAAADVGDGRQAGKPQVKKA) are disordered. One can recognise a Myosin motor domain in the interval 50-729 (IGVSDLTLLS…TLFALETMRD (680 aa)). 143 to 150 (GESGAGKT) lines the ATP pocket. Phosphoserine is present on Ser-371. Residues 418 to 500 (SIGILDIYGF…PGVFAALNDA (83 aa)) form an actin-binding region. IQ domains lie at 733 to 753 (HNMA…RIEC) and 754 to 779 (AIRI…QGHQ). In terms of domain architecture, TH1 spans 787–980 (RRRMSLLGSR…TIHTSAGEPP (194 aa)). Disordered stretches follow at residues 960–1102 (GASN…VLYD) and 1144–1270 (PEAY…DDEW). A compositionally biased stretch (polar residues) spans 963–974 (NVDSYKSSTIHT). Residues 1023 to 1058 (ARQPMPQPTPQPAAVQPPPAPRPAVSPAAQPRPVPQ) are compositionally biased toward pro residues. The segment covering 1059–1078 (PVAAVAAAQHTRNASSSSTR) has biased composition (low complexity). Residues 1079-1088 (APPPPPPATP) show a composition bias toward pro residues. Positions 1092 to 1153 (QRKPMAKVLY…PEAYLEEQVA (62 aa)) constitute an SH3 domain. Over residues 1157 to 1167 (KPAPPPPPPAA) the composition is skewed to pro residues. Composition is skewed to low complexity over residues 1168 to 1186 (PRAS…VAAK) and 1238 to 1252 (NSAS…LAEA).

Belongs to the TRAFAC class myosin-kinesin ATPase superfamily. Myosin family. Post-translationally, phosphorylation of the TEDS site (Ser-371) is required for the polarization of the actin cytoskeleton. Phosphorylation probably activates the myosin-I ATPase activity.

The protein localises to the cytoplasm. Its subcellular location is the cytoskeleton. It localises to the actin patch. Its function is as follows. Type-I myosin implicated in the organization of the actin cytoskeleton. Required for proper actin cytoskeleton polarization. At the cell cortex, assembles in patch-like structures together with proteins from the actin-polymerizing machinery and promotes actin assembly. Functions as actin nucleation-promoting factor (NPF) for the Arp2/3 complex. Plays an important role in polarized growth, spore germination, hyphal morphogenesis, and septal wall formation. The chain is Myosin-1 (myoA) from Aspergillus niger (strain ATCC MYA-4892 / CBS 513.88 / FGSC A1513).